The sequence spans 130 residues: Small ribosomal subunit protein uS11 (130 aa).

This sequence belongs to the universal ribosomal protein uS11 family. Part of the 30S ribosomal subunit. Interacts with proteins S7 and S18. Binds to IF-3.

Its function is as follows. Located on the platform of the 30S subunit, it bridges several disparate RNA helices of the 16S rRNA. Forms part of the Shine-Dalgarno cleft in the 70S ribosome. This is Small ribosomal subunit protein uS11 from Thermosynechococcus vestitus (strain NIES-2133 / IAM M-273 / BP-1).